The following is a 399-amino-acid chain: MVCLKTLSVFLAAFAAADARAVFKTQGHKNSEMIPDNYIVVMKDGVSQDDFKAHISSVASIHSTNKAKRGTNTQGMKREFDIMNWRGYHGHFDRDTLEEILNDSKVDYVEQDQVVRISGLVTQRSAPSWGLGRVSHRQAGSRDYVFDDSAGRGVTIYGVDTGIDINHQDFRGRARWGTNTADRDNADRHGHGTHTASTFAGTAYGIAKNANIVAVKVLGSDGSGSTSGIIAGINYCVQDAQQRGILGKAAMNLSLGGGFSQANNDAVTRAQNAGIFVAVAAGNDNRDARNYSPASAPAVCTVASSTINDSKSSFSNWGPVVDIYAPGSDIIAARPGGGSTTMSGTSMASPHVAGMGAYMIGMGADPRQVCDRLKQLATAAIRNPGSSTTNRLLYNGSGQ.

The signal sequence occupies residues 1–19 (MVCLKTLSVFLAAFAAADA). The propeptide occupies 20 to 118 (RAVFKTQGHK…VEQDQVVRIS (99 aa)). The region spanning 38–117 (YIVVMKDGVS…YVEQDQVVRI (80 aa)) is the Inhibitor I9 domain. In terms of domain architecture, Peptidase S8 spans 128–399 (SWGLGRVSHR…NRLLYNGSGQ (272 aa)). Residues aspartate 160 and histidine 191 each act as charge relay system in the active site. N-linked (GlcNAc...) asparagine glycosylation is found at asparagine 252 and asparagine 308. The active-site Charge relay system is the serine 346. Residue asparagine 395 is glycosylated (N-linked (GlcNAc...) asparagine).

The protein belongs to the peptidase S8 family.

The protein localises to the secreted. Secreted subtilisin-like serine protease with keratinolytic activity that contributes to pathogenicity. The chain is Subtilisin-like protease 4 (SUB4) from Arthroderma benhamiae (strain ATCC MYA-4681 / CBS 112371) (Trichophyton mentagrophytes).